We begin with the raw amino-acid sequence, 137 residues long: Nucleoside diphosphate kinase (137 aa).

Residues Lys9, Phe57, Arg85, Thr91, Arg102, and Asn112 each contribute to the ATP site. The Pros-phosphohistidine intermediate role is filled by His115.

The protein belongs to the NDK family. As to quaternary structure, homotetramer. Mg(2+) serves as cofactor.

It is found in the cytoplasm. It catalyses the reaction a 2'-deoxyribonucleoside 5'-diphosphate + ATP = a 2'-deoxyribonucleoside 5'-triphosphate + ADP. The enzyme catalyses a ribonucleoside 5'-diphosphate + ATP = a ribonucleoside 5'-triphosphate + ADP. Major role in the synthesis of nucleoside triphosphates other than ATP. The ATP gamma phosphate is transferred to the NDP beta phosphate via a ping-pong mechanism, using a phosphorylated active-site intermediate. In Citrifermentans bemidjiense (strain ATCC BAA-1014 / DSM 16622 / JCM 12645 / Bem) (Geobacter bemidjiensis), this protein is Nucleoside diphosphate kinase.